Consider the following 188-residue polypeptide: Mediator of RNA polymerase II transcription subunit 29 (188 aa).

Low complexity-rich tracts occupy residues 1–23 (MNPN…QSSP) and 30–43 (VQHQ…PLQQ). Residues 1 to 43 (MNPNMNMMPMSGPQMMQVMQSSPSGPPGPVQHQQQQPPQPLQQ) are disordered.

It belongs to the Mediator complex subunit 29 family. Component of the Mediator complex. Self-associates. Interacts with dsx.

It localises to the nucleus. In terms of biological role, component of the Mediator complex, a coactivator involved in the regulated transcription of nearly all RNA polymerase II-dependent genes. Mediator functions as a bridge to convey information from gene-specific regulatory proteins to the basal RNA polymerase II transcription machinery. Mediator is recruited to promoters by direct interactions with regulatory proteins and serves as a scaffold for the assembly of a functional preinitiation complex with RNA polymerase II and the general transcription factors. Required for female somatic sexual development. This Drosophila melanogaster (Fruit fly) protein is Mediator of RNA polymerase II transcription subunit 29 (ix).